We begin with the raw amino-acid sequence, 180 residues long: Thioredoxin 3 (180 aa).

At 1–3 (MAL) the chain is on the cytoplasmic side. The chain crosses the membrane as a helical; Signal-anchor for type II membrane protein span at residues 4–24 (ICIGSVCFSLFHIGVIILLII). The Lumenal segment spans residues 25–180 (NYFSSHIKKI…FQKYCLEKAK (156 aa)). Positions 29–176 (SHIKKIFPSF…IEKAFQKYCL (148 aa)) constitute a Thioredoxin domain. Catalysis depends on nucleophile residues C99 and C102. Cysteines 99 and 102 form a disulfide.

The protein belongs to the thioredoxin family. The disulfide bond between Cys-99 and Cys-102 acts as a redox-active center and is reduced by thioredoxin reductase TRXR.

The protein resides in the endoplasmic reticulum membrane. Functionally, participates in various redox reactions through the reversible oxidation of its active center dithiol to a disulfide and catalyzes dithiol-disulfide exchange reactions. This chain is Thioredoxin 3, found in Plasmodium falciparum (isolate 3D7).